A 543-amino-acid chain; its full sequence is Carboxypeptidase Y homolog A (543 aa).

An N-terminal signal peptide occupies residues 1–17 (MRVLPATLLVGAATAAA). The propeptide occupies 18-124 (PPFQQILGLP…KLEAYDLRVK (107 aa)). 5 cysteine pairs are disulfide-bonded: cysteine 179–cysteine 419, cysteine 313–cysteine 327, cysteine 337–cysteine 360, cysteine 344–cysteine 353, and cysteine 382–cysteine 389. Asparagine 210 is a glycosylation site (N-linked (GlcNAc...) asparagine). Serine 266 is a catalytic residue. Aspartate 458 is an active-site residue. N-linked (GlcNAc...) asparagine glycosylation is present at asparagine 509. The active site involves histidine 520.

The protein belongs to the peptidase S10 family.

The protein resides in the vacuole. The catalysed reaction is Release of a C-terminal amino acid with broad specificity.. In terms of biological role, vacuolar carboxypeptidase involved in degradation of small peptides. Digests preferentially peptides containing an aliphatic or hydrophobic residue in P1' position, as well as methionine, leucine or phenylalanine in P1 position of ester substrate. The polypeptide is Carboxypeptidase Y homolog A (cpyA) (Aspergillus fumigatus (strain ATCC MYA-4609 / CBS 101355 / FGSC A1100 / Af293) (Neosartorya fumigata)).